A 747-amino-acid polypeptide reads, in one-letter code: Elongation factor G, mitochondrial (747 aa).

A mitochondrion-targeting transit peptide spans 1–32 (MTLITRVLNGNLPLRLSTLKAARQLQCGYSSH). Residues 42–319 (ERIRNIGISA…AVVDYLPNPG (278 aa)) enclose the tr-type G domain. GTP contacts are provided by residues 51–58 (AHIDSGKT), 118–122 (DTPGH), and 172–175 (NKLD).

The protein belongs to the TRAFAC class translation factor GTPase superfamily. Classic translation factor GTPase family. EF-G/EF-2 subfamily.

The protein localises to the mitochondrion. The protein operates within protein biosynthesis; polypeptide chain elongation. In terms of biological role, mitochondrial GTPase that catalyzes the GTP-dependent ribosomal translocation step during translation elongation. During this step, the ribosome changes from the pre-translocational (PRE) to the post-translocational (POST) state as the newly formed A-site-bound peptidyl-tRNA and P-site-bound deacylated tRNA move to the P and E sites, respectively. Catalyzes the coordinated movement of the two tRNA molecules, the mRNA and conformational changes in the ribosome. Essential during development as it acts as a retrograde signal from mitochondria to the nucleus to slow down cell proliferation if mitochondrial energy output is low. The sequence is that of Elongation factor G, mitochondrial from Drosophila mojavensis (Fruit fly).